The chain runs to 382 residues: Anhydro-N-acetylmuramic acid kinase (382 aa).

22 to 29 (GTSMDGVD) serves as a coordination point for ATP.

Belongs to the anhydro-N-acetylmuramic acid kinase family.

The enzyme catalyses 1,6-anhydro-N-acetyl-beta-muramate + ATP + H2O = N-acetyl-D-muramate 6-phosphate + ADP + H(+). It functions in the pathway amino-sugar metabolism; 1,6-anhydro-N-acetylmuramate degradation. It participates in cell wall biogenesis; peptidoglycan recycling. In terms of biological role, catalyzes the specific phosphorylation of 1,6-anhydro-N-acetylmuramic acid (anhMurNAc) with the simultaneous cleavage of the 1,6-anhydro ring, generating MurNAc-6-P. Is required for the utilization of anhMurNAc either imported from the medium or derived from its own cell wall murein, and thus plays a role in cell wall recycling. In Burkholderia cenocepacia (strain ATCC BAA-245 / DSM 16553 / LMG 16656 / NCTC 13227 / J2315 / CF5610) (Burkholderia cepacia (strain J2315)), this protein is Anhydro-N-acetylmuramic acid kinase.